Reading from the N-terminus, the 222-residue chain is V-type ATP synthase subunit D (222 aa).

Belongs to the V-ATPase D subunit family.

Produces ATP from ADP in the presence of a proton gradient across the membrane. This chain is V-type ATP synthase subunit D, found in Clostridioides difficile (strain 630) (Peptoclostridium difficile).